The sequence spans 414 residues: Esterase FrsA (414 aa).

This sequence belongs to the FrsA family.

It carries out the reaction a carboxylic ester + H2O = an alcohol + a carboxylate + H(+). In terms of biological role, catalyzes the hydrolysis of esters. The sequence is that of Esterase FrsA from Salmonella dublin (strain CT_02021853).